The primary structure comprises 39 residues: Cytochrome b559 subunit beta (39 aa).

The chain crosses the membrane as a helical span at residues 14–30 (WLAVHGLAVPTVFFLGA). A heme-binding site is contributed by His-18.

It belongs to the PsbE/PsbF family. Heterodimer of an alpha subunit and a beta subunit. PSII is composed of 1 copy each of membrane proteins PsbA, PsbB, PsbC, PsbD, PsbE, PsbF, PsbH, PsbI, PsbJ, PsbK, PsbL, PsbM, PsbT, PsbX, PsbY, PsbZ, Psb30/Ycf12, at least 3 peripheral proteins of the oxygen-evolving complex and a large number of cofactors. It forms dimeric complexes. It depends on heme b as a cofactor.

The protein localises to the plastid. The protein resides in the chloroplast thylakoid membrane. This b-type cytochrome is tightly associated with the reaction center of photosystem II (PSII). PSII is a light-driven water:plastoquinone oxidoreductase that uses light energy to abstract electrons from H(2)O, generating O(2) and a proton gradient subsequently used for ATP formation. It consists of a core antenna complex that captures photons, and an electron transfer chain that converts photonic excitation into a charge separation. The sequence is that of Cytochrome b559 subunit beta from Physcomitrium patens (Spreading-leaved earth moss).